Here is a 460-residue protein sequence, read N- to C-terminus: Cysteine--tRNA ligase (460 aa).

Cys-29 contributes to the Zn(2+) binding site. A 'HIGH' region motif is present at residues 31–41; it reads PTVYDFAHIGN. Zn(2+) contacts are provided by Cys-227, His-252, and Glu-256. Positions 285-289 match the 'KMSKS' region motif; sequence KMSKS. Residue Lys-288 coordinates ATP.

It belongs to the class-I aminoacyl-tRNA synthetase family. As to quaternary structure, monomer. Requires Zn(2+) as cofactor.

The protein resides in the cytoplasm. The enzyme catalyses tRNA(Cys) + L-cysteine + ATP = L-cysteinyl-tRNA(Cys) + AMP + diphosphate. This chain is Cysteine--tRNA ligase, found in Bradyrhizobium diazoefficiens (strain JCM 10833 / BCRC 13528 / IAM 13628 / NBRC 14792 / USDA 110).